A 530-amino-acid polypeptide reads, in one-letter code: MSNPPFQRQQPSSPLTTPNHHPSNHQHHASRKPSIVELLSSPPPLPNNTIDDEIHQFSLSRNTSISSRTSSFSQQQHGAPHHGSNSHHLSVSGMDWSEIPLSELTESNKLIYINSSYSVQKAFETLVSNNLTSVPVSISSSNENDLSSCLTFDYSDLNTYLLLIMNKINLSELSVSEIGNEHDSTAKKHEIITQTINKAKRGEEVPIEFIIKLHPKNPFIKFTENDTLFKVMETLGNGVHRVAITNLESTKITGILSQRRLIKYMWENARRFPSLDFYLNSTLQDLKIGSSTPIFIYEDQLLIEALYKMFNERVSSLAVIDRTKSLIGNISIVDVKNVSSSKNSHLLFKSVLTFISYNLSQKGIEEGQDQYPIFHVNKQSSLGRVIAKLVATQSHRLWIVESNTRTHQNSISSPVTIEATLNVSANPSSASSSNANTPEGNFGLPGKLIGVVTLTDILGLFATSKGTKTDPQFARNQRRRSSTSTTRSSIDSAISVGDGSARTTNANADSEIFRKSYTAAAKNESAISKD.

Over residues 1 to 21 (MSNPPFQRQQPSSPLTTPNHH) the composition is skewed to polar residues. Disordered regions lie at residues 1–51 (MSNP…NTID) and 65–89 (ISSR…SHHL). Residues 22 to 31 (PSNHQHHASR) show a composition bias toward basic residues. CBS domains lie at 213 to 274 (LHPK…RFPS) and 289 to 347 (GSST…SHLL). The tract at residues 467–509 (TKTDPQFARNQRRRSSTSTTRSSIDSAISVGDGSARTTNANAD) is disordered.

Belongs to the SDS23 family.

Its subcellular location is the cytoplasm. The protein resides in the nucleus. In terms of biological role, involved in DNA replication and cell separation. This is Protein SDS23 (SDS23) from Scheffersomyces stipitis (strain ATCC 58785 / CBS 6054 / NBRC 10063 / NRRL Y-11545) (Yeast).